We begin with the raw amino-acid sequence, 349 residues long: Serine/threonine-protein kinase SRK2A (349 aa).

The 257-residue stretch at 12 to 268 folds into the Protein kinase domain; sequence YELVKDIGSG…IQEIKNHEWF (257 aa). ATP-binding positions include 18 to 26 and K41; that span reads IGSGNFGVA. The active-site Proton acceptor is the D131. The interval 151 to 177 is activation loop; the sequence is DFGYSKSSLLHSQPKSTVGTPAYIAPE.

This sequence belongs to the protein kinase superfamily. Ser/Thr protein kinase family.

It catalyses the reaction L-seryl-[protein] + ATP = O-phospho-L-seryl-[protein] + ADP + H(+). The enzyme catalyses L-threonyl-[protein] + ATP = O-phospho-L-threonyl-[protein] + ADP + H(+). Activated by osmotic stress and by abscisic acid (ABA). Activation by NaCl is dependent on ABA. In terms of biological role, involved in early responses to osmotic stress. The polypeptide is Serine/threonine-protein kinase SRK2A (Physcomitrium patens (Spreading-leaved earth moss)).